Here is a 293-residue protein sequence, read N- to C-terminus: 4-hydroxybenzoate octaprenyltransferase (293 aa).

Helical transmembrane passes span 26–46 (IGTLLLLWPCLMALLFAAKGM), 49–69 (IKVLLIFILGVVIMRACGCII), 102–122 (LFALLGLLAFALVLLLNPLVV), 148–168 (FLGIVWSWSIPMAYAAQLGEV), 173–193 (WWLFAANWCWTVAYDTMYAMI), 217–237 (WIAVFQLMAFGCFLMAGLSAE), 240–260 (FIYALGLLGFIAFSVYQQRLI), and 272–292 (FLNNNWVGMLLFLTLAADYLL).

This sequence belongs to the UbiA prenyltransferase family. Requires Mg(2+) as cofactor.

Its subcellular location is the cell inner membrane. It catalyses the reaction all-trans-octaprenyl diphosphate + 4-hydroxybenzoate = 4-hydroxy-3-(all-trans-octaprenyl)benzoate + diphosphate. Its pathway is cofactor biosynthesis; ubiquinone biosynthesis. Its function is as follows. Catalyzes the prenylation of para-hydroxybenzoate (PHB) with an all-trans polyprenyl group. Mediates the second step in the final reaction sequence of ubiquinone-8 (UQ-8) biosynthesis, which is the condensation of the polyisoprenoid side chain with PHB, generating the first membrane-bound Q intermediate 3-octaprenyl-4-hydroxybenzoate. The protein is 4-hydroxybenzoate octaprenyltransferase of Shewanella denitrificans (strain OS217 / ATCC BAA-1090 / DSM 15013).